Here is a 220-residue protein sequence, read N- to C-terminus: Deoxyribose-phosphate aldolase (220 aa).

Aspartate 89 serves as the catalytic Proton donor/acceptor. Catalysis depends on lysine 151, which acts as the Schiff-base intermediate with acetaldehyde. Residue lysine 180 is the Proton donor/acceptor of the active site.

This sequence belongs to the DeoC/FbaB aldolase family. DeoC type 1 subfamily.

The protein resides in the cytoplasm. The catalysed reaction is 2-deoxy-D-ribose 5-phosphate = D-glyceraldehyde 3-phosphate + acetaldehyde. It functions in the pathway carbohydrate degradation; 2-deoxy-D-ribose 1-phosphate degradation; D-glyceraldehyde 3-phosphate and acetaldehyde from 2-deoxy-alpha-D-ribose 1-phosphate: step 2/2. Functionally, catalyzes a reversible aldol reaction between acetaldehyde and D-glyceraldehyde 3-phosphate to generate 2-deoxy-D-ribose 5-phosphate. The polypeptide is Deoxyribose-phosphate aldolase (Deinococcus radiodurans (strain ATCC 13939 / DSM 20539 / JCM 16871 / CCUG 27074 / LMG 4051 / NBRC 15346 / NCIMB 9279 / VKM B-1422 / R1)).